Consider the following 60-residue polypeptide: MDTKLLELLVCPVTKGPLTWNPEKQELCSRSARLAYPVRDGIPVLLENEARTLSDEELGL.

It belongs to the UPF0434 family.

This is UPF0434 protein Vapar_2640 from Variovorax paradoxus (strain S110).